The sequence spans 177 residues: Cytochrome c oxidase assembly protein CtaG (177 aa).

At 1-8 (MTQKAKNT) the chain is on the cytoplasmic side. Residues 9-29 (IYLLILIILSMLCLVYASVPL) form a helical; Signal-anchor for type II membrane protein membrane-spanning segment. Topologically, residues 30-177 (YSIFCKVTGY…TFFKYKENTK (148 aa)) are periplasmic.

Belongs to the COX11/CtaG family.

The protein resides in the cell inner membrane. Functionally, exerts its effect at some terminal stage of cytochrome c oxidase synthesis, probably by being involved in the insertion of the copper B into subunit I. This chain is Cytochrome c oxidase assembly protein CtaG, found in Ehrlichia ruminantium (strain Welgevonden).